The sequence spans 484 residues: 1,4-beta-D-glucan cellobiohydrolase CEL6A (484 aa).

The first 17 residues, 1-17 (MAKRLLLTAALAATTLA), serve as a signal peptide directing secretion. Positions 26-62 (NCGSVWSQCGGQGWTGATCCASGSTCVAQNQWYSQCL) constitute a CBM1 domain. 2 disulfides stabilise this stretch: Cys34/Cys51 and Cys45/Cys61. The disordered stretch occupies residues 68–98 (TTTAQAPSSTRTTTSSSSRPTSSSISTSAVN). The substrate site is built by Trp171 and Asp173. Asn175 carries N-linked (GlcNAc...) asparagine glycosylation. Residues 208–230 (YDLPDRDCAAAASNGEWAIADGG) are substrate binding loop 1. Asp260 acts as the Proton donor in catalysis. Positions 305, 308, 344, 405, 433, and 437 each coordinate substrate. Positions 431-469 (WIKPGGECDGTSDTTAARYDHHCGFADALKPAPEAGQWF) are substrate binding loop 2. Catalysis depends on Asp439, which acts as the Proton acceptor.

This sequence belongs to the glycosyl hydrolase 6 (cellulase B) family. As to quaternary structure, monomer. In terms of processing, both N- and O-glycosylated.

Its subcellular location is the secreted. It catalyses the reaction Hydrolysis of (1-&gt;4)-beta-D-glucosidic linkages in cellulose and cellotetraose, releasing cellobiose from the non-reducing ends of the chains.. Exoglucanase that plays an important function in biomass degradation by catalyzing the hydrolysis of the non-reducing end beta-1,4-glucosidic linkages in cellulose and cellotetraose to release cellobiose. Hydrolyzes crystalline and amorphous cellulose but is inactive on hydroxyethyl cellulose, mannan, galactomannan, xyloglucan, arabinoxylan, arabinan, xylan, and pectin. In Podospora anserina (strain S / ATCC MYA-4624 / DSM 980 / FGSC 10383) (Pleurage anserina), this protein is 1,4-beta-D-glucan cellobiohydrolase CEL6A.